The sequence spans 93 residues: Small ribosomal subunit protein uS19 (93 aa).

This sequence belongs to the universal ribosomal protein uS19 family.

Its function is as follows. Protein S19 forms a complex with S13 that binds strongly to the 16S ribosomal RNA. This chain is Small ribosomal subunit protein uS19, found in Desulfitobacterium hafniense (strain Y51).